The sequence spans 200 residues: Glycerol-3-phosphate acyltransferase (200 aa).

Transmembrane regions (helical) follow at residues 1–21 (MITV…FAVV), 51–71 (VAAA…VVVA), 84–104 (VIAS…FLAF), 116–136 (ILLG…IIVA), and 159–179 (FLLQ…LLIL).

The protein belongs to the PlsY family. Probably interacts with PlsX.

Its subcellular location is the cell inner membrane. The enzyme catalyses an acyl phosphate + sn-glycerol 3-phosphate = a 1-acyl-sn-glycero-3-phosphate + phosphate. Its pathway is lipid metabolism; phospholipid metabolism. Functionally, catalyzes the transfer of an acyl group from acyl-phosphate (acyl-PO(4)) to glycerol-3-phosphate (G3P) to form lysophosphatidic acid (LPA). This enzyme utilizes acyl-phosphate as fatty acyl donor, but not acyl-CoA or acyl-ACP. This is Glycerol-3-phosphate acyltransferase from Nitrosomonas eutropha (strain DSM 101675 / C91 / Nm57).